The sequence spans 258 residues: Leucyl/phenylalanyl-tRNA--protein transferase (258 aa).

The protein belongs to the L/F-transferase family.

The protein localises to the cytoplasm. The enzyme catalyses N-terminal L-lysyl-[protein] + L-leucyl-tRNA(Leu) = N-terminal L-leucyl-L-lysyl-[protein] + tRNA(Leu) + H(+). The catalysed reaction is N-terminal L-arginyl-[protein] + L-leucyl-tRNA(Leu) = N-terminal L-leucyl-L-arginyl-[protein] + tRNA(Leu) + H(+). It carries out the reaction L-phenylalanyl-tRNA(Phe) + an N-terminal L-alpha-aminoacyl-[protein] = an N-terminal L-phenylalanyl-L-alpha-aminoacyl-[protein] + tRNA(Phe). Its function is as follows. Functions in the N-end rule pathway of protein degradation where it conjugates Leu, Phe and, less efficiently, Met from aminoacyl-tRNAs to the N-termini of proteins containing an N-terminal arginine or lysine. The sequence is that of Leucyl/phenylalanyl-tRNA--protein transferase from Alkalilimnicola ehrlichii (strain ATCC BAA-1101 / DSM 17681 / MLHE-1).